A 1009-amino-acid polypeptide reads, in one-letter code: MTAPVQWRTFFHQCLIHRIDASEFRNLSKLLFQKCPIAESALLDALLQTRSESRIKWDPLLPLYIDCLCRMGRVRTSTVLTSLLKYSSIHDKPQLPTSEGKDGSKCYTLMTDIRVIQDAMLSVSTGSTPKTNAEAIAIFFAIIDWIHAVASWHNSHFDPGQHSSGMMSSPDVVSLFESLGILLAALSGTGKGLEVLSADSHEGLKVKLGQALSAYLPLCVEVSLPLRNRLDGLQKEFNLYGERAPKSLDVPMMENMNVNALQFEASVMDGPVINSRAGLYVFINAMLVGRPLVDDSMLINYLANRYGGHYEALIEEILTAAFDVLSNGMYRNESSRTMFVFRSFLVNKLPAFFAAMLASTMVSIPMEMCISHALSRLDPNTFPSFSQMFEMQGNTVLSDVRQEFLFACASHKLIPESSIERLLGENPMQTLPVGYNKDELVSQINANPERAEQLINEIESMEGNAGAIIGAITEVMHNLCNQKETMTLKNICNSLSRRPQALDVVLIFRNPKQVLQPLCALLDSWHWDEDQGEYQPVYDEFGSILLLVLAFKYRFDLRPADLGISSNDSFVLRLLERGTCSQKLDALDEKQNKNLGSWIAALFIAEGISEETMSACSPQEFYLLVATLFSQSLEACETGKLEFDTLKGGFEYLLEPFLLPSLIFALTWLGDHIWETELDPSIPLKALQSLVNPSSISGEAREIHRTVLNITARTLEEQLKDVRTRHPSRTDIKPILDSLEPCLSFQLVGSSHRSELESWTTHSGGGLLGGIRSTFQSLVLWSTNPEVSMAPPPYTHRQLIAGVRMLGASRVLPPLIEELKLQTEAGNGPLALDLAATLICAPMAETFSVEQNSHQPVDPNKEALPRCGILTLRDVLALQHENVPKISEKDPLRAEVLVRLYRRVNALLAPPSQVPNLDVNNIIQNMQLGGVGVGVGAGQMELDAAGAADHGVGPDDAENIHRMIDNAAAAAALDSSGTGLDTSIDDVLNAADMAVGNPEFLDLDMEGMF.

It belongs to the Mediator complex subunit 5 family. In terms of assembly, component of the Mediator complex.

The protein resides in the nucleus. Functionally, component of the Mediator complex, a coactivator involved in the regulated transcription of nearly all RNA polymerase II-dependent genes. Mediator functions as a bridge to convey information from gene-specific regulatory proteins to the basal RNA polymerase II transcription machinery. Mediator is recruited to promoters by direct interactions with regulatory proteins and serves as a scaffold for the assembly of a functional preinitiation complex with RNA polymerase II and the general transcription factors. This Neosartorya fischeri (strain ATCC 1020 / DSM 3700 / CBS 544.65 / FGSC A1164 / JCM 1740 / NRRL 181 / WB 181) (Aspergillus fischerianus) protein is Mediator of RNA polymerase II transcription subunit 5 (nut1).